The sequence spans 547 residues: CTP synthase (547 aa).

The interval 1–265 (MARYVFITGG…DQAVLDAFGI (265 aa)) is amidoligase domain. Residue Ser-13 coordinates CTP. A UTP-binding site is contributed by Ser-13. ATP is bound by residues 14-19 (SLGKGL) and Asp-71. The Mg(2+) site is built by Asp-71 and Glu-139. Residues 146 to 148 (DIE), 186 to 191 (KTKPTQ), and Lys-222 contribute to the CTP site. UTP-binding positions include 186–191 (KTKPTQ) and Lys-222. The Glutamine amidotransferase type-1 domain maps to 291–546 (RVAIVGKYTQ…VRAAVEVSRL (256 aa)). Gly-353 contributes to the L-glutamine binding site. Cys-380 (nucleophile; for glutamine hydrolysis) is an active-site residue. Residues 381 to 384 (LGMQ), Glu-404, and Arg-474 contribute to the L-glutamine site. Catalysis depends on residues His-519 and Glu-521.

Belongs to the CTP synthase family. Homotetramer.

The enzyme catalyses UTP + L-glutamine + ATP + H2O = CTP + L-glutamate + ADP + phosphate + 2 H(+). It catalyses the reaction L-glutamine + H2O = L-glutamate + NH4(+). The catalysed reaction is UTP + NH4(+) + ATP = CTP + ADP + phosphate + 2 H(+). It participates in pyrimidine metabolism; CTP biosynthesis via de novo pathway; CTP from UDP: step 2/2. With respect to regulation, allosterically activated by GTP, when glutamine is the substrate; GTP has no effect on the reaction when ammonia is the substrate. The allosteric effector GTP functions by stabilizing the protein conformation that binds the tetrahedral intermediate(s) formed during glutamine hydrolysis. Inhibited by the product CTP, via allosteric rather than competitive inhibition. Its function is as follows. Catalyzes the ATP-dependent amination of UTP to CTP with either L-glutamine or ammonia as the source of nitrogen. Regulates intracellular CTP levels through interactions with the four ribonucleotide triphosphates. This Cereibacter sphaeroides (strain ATCC 17029 / ATH 2.4.9) (Rhodobacter sphaeroides) protein is CTP synthase.